The primary structure comprises 309 residues: Malate dehydrogenase (309 aa).

NAD(+)-binding positions include 6–11 and aspartate 31; that span reads GSGRVG. Substrate-binding residues include arginine 80 and arginine 86. NAD(+) contacts are provided by residues asparagine 93 and 116 to 118; that span reads TTN. 2 residues coordinate substrate: asparagine 118 and arginine 149. The active-site Proton acceptor is the histidine 173.

This sequence belongs to the LDH/MDH superfamily. In terms of assembly, homotetramer.

It catalyses the reaction (S)-malate + NAD(+) = oxaloacetate + NADH + H(+). Functionally, catalyzes the reversible oxidation of malate to oxaloacetate. Exhibits higher specific activity for oxaloacetate reduction than for malate oxidation in vitro. Has a strong preference for NAD. Can use NADPH for oxaloacetate reduction, but activity decreases more than 90%. No activity detected with NADP(+) and malate. This chain is Malate dehydrogenase, found in Pyrobaculum islandicum (strain DSM 4184 / JCM 9189 / GEO3).